A 95-amino-acid polypeptide reads, in one-letter code: Aspartyl/glutamyl-tRNA(Asn/Gln) amidotransferase subunit C (95 aa).

The protein belongs to the GatC family. Heterotrimer of A, B and C subunits.

The catalysed reaction is L-glutamyl-tRNA(Gln) + L-glutamine + ATP + H2O = L-glutaminyl-tRNA(Gln) + L-glutamate + ADP + phosphate + H(+). It catalyses the reaction L-aspartyl-tRNA(Asn) + L-glutamine + ATP + H2O = L-asparaginyl-tRNA(Asn) + L-glutamate + ADP + phosphate + 2 H(+). Its function is as follows. Allows the formation of correctly charged Asn-tRNA(Asn) or Gln-tRNA(Gln) through the transamidation of misacylated Asp-tRNA(Asn) or Glu-tRNA(Gln) in organisms which lack either or both of asparaginyl-tRNA or glutaminyl-tRNA synthetases. The reaction takes place in the presence of glutamine and ATP through an activated phospho-Asp-tRNA(Asn) or phospho-Glu-tRNA(Gln). This chain is Aspartyl/glutamyl-tRNA(Asn/Gln) amidotransferase subunit C, found in Chelativorans sp. (strain BNC1).